The following is a 599-amino-acid chain: Elongation factor 4 (599 aa).

The 183-residue stretch at 2–184 folds into the tr-type G domain; sequence KNIRNFSIIA…RLVRDIPPPE (183 aa). GTP is bound by residues 14 to 19 and 131 to 134; these read DHGKST and NKID.

This sequence belongs to the TRAFAC class translation factor GTPase superfamily. Classic translation factor GTPase family. LepA subfamily.

It is found in the cell inner membrane. It carries out the reaction GTP + H2O = GDP + phosphate + H(+). Required for accurate and efficient protein synthesis under certain stress conditions. May act as a fidelity factor of the translation reaction, by catalyzing a one-codon backward translocation of tRNAs on improperly translocated ribosomes. Back-translocation proceeds from a post-translocation (POST) complex to a pre-translocation (PRE) complex, thus giving elongation factor G a second chance to translocate the tRNAs correctly. Binds to ribosomes in a GTP-dependent manner. This Klebsiella pneumoniae subsp. pneumoniae (strain ATCC 700721 / MGH 78578) protein is Elongation factor 4.